We begin with the raw amino-acid sequence, 198 residues long: Type II secretion system protein J (198 aa).

The propeptide at M1 to G7 is leader sequence. N-methylphenylalanine is present on F8. The helical transmembrane segment at F8 to V28 threads the bilayer.

The protein belongs to the GSP J family. As to quaternary structure, type II secretion is composed of four main components: the outer membrane complex, the inner membrane complex, the cytoplasmic secretion ATPase and the periplasm-spanning pseudopilus. Interacts with core component PulG. Cleaved by prepilin peptidase. In terms of processing, methylated by prepilin peptidase at the amino group of the N-terminal phenylalanine once the leader sequence is cleaved by prepilin peptidase.

Its subcellular location is the cell inner membrane. Functionally, component of the type II secretion system required for the energy-dependent secretion of extracellular factors such as proteases and toxins from the periplasm. Part of the pseudopilus tip complex that is critical for the recognition and binding of secretion substrates. This Klebsiella pneumoniae protein is Type II secretion system protein J (pulJ).